The sequence spans 210 residues: Keratin-associated protein 4-9 (210 aa).

A run of 28 repeats spans residues 24–28, 29–33, 34–38, 39–43, 44–48, 49–53, 54–58, 59–63, 69–73, 74–78, 84–88, 89–93, 94–98, 99–103, 104–108, 109–113, 114–118, 119–123, 124–128, 129–133, 134–138, 139–143, 144–148, 149–153, 159–163, 164–168, 169–173, and 174–178. A 29 X 5 AA repeats of C-C-[RQVHIEK]-[SPTR]-[VSTQCRNP] region spans residues 24–178; it reads CCRPSCCETT…CCRPCCCVRP (155 aa).

Belongs to the KRTAP type 4 family. In terms of assembly, interacts with hair keratins. As to expression, expressed in the hair follicles.

In the hair cortex, hair keratin intermediate filaments are embedded in an interfilamentous matrix, consisting of hair keratin-associated proteins (KRTAP), which are essential for the formation of a rigid and resistant hair shaft through their extensive disulfide bond cross-linking with abundant cysteine residues of hair keratins. The matrix proteins include the high-sulfur and high-glycine-tyrosine keratins. The chain is Keratin-associated protein 4-9 (KRTAP4-9) from Homo sapiens (Human).